A 1357-amino-acid chain; its full sequence is RNA2 polyprotein (1357 aa).

This sequence belongs to the nepoviruses RNA2 polyprotein family. Post-translationally, specific enzymatic cleavages in vivo by the P1 encoded 3C-like protease yield mature proteins.

It is found in the host cell junction. The protein localises to the host plasmodesma. Its subcellular location is the host cytoplasm. The protein resides in the host nucleus. It localises to the virion. Functionally, implicated in RNA2 replication. Could also be required for nematode transmission of the virus. Its function is as follows. Transports viral genome to neighboring plant cells directly through plasmosdesmata, without any budding. The movement protein allows efficient cell to cell propagation, by bypassing the host cell wall barrier. Acts by forming a tubular structure at the host plasmodesmata, enlarging it enough to allow free passage of virion capsids. In Beet ringspot virus (BRSV), this protein is RNA2 polyprotein.